Here is a 630-residue protein sequence, read N- to C-terminus: tRNA uridine 5-carboxymethylaminomethyl modification enzyme MnmG (630 aa).

FAD-binding positions include 14–19, V126, and S181; that span reads GAGHAG. Residue 273-287 coordinates NAD(+); the sequence is GPRYCPSIEDKVVRF. FAD is bound at residue Q370.

This sequence belongs to the MnmG family. Homodimer. Heterotetramer of two MnmE and two MnmG subunits. It depends on FAD as a cofactor.

The protein resides in the cytoplasm. NAD-binding protein involved in the addition of a carboxymethylaminomethyl (cmnm) group at the wobble position (U34) of certain tRNAs, forming tRNA-cmnm(5)s(2)U34. In Alkaliphilus metalliredigens (strain QYMF), this protein is tRNA uridine 5-carboxymethylaminomethyl modification enzyme MnmG.